Here is a 64-residue protein sequence, read N- to C-terminus: Prokaryotic ubiquitin-like protein Pup (64 aa).

Residues 1–11 (MAQEQTKRTGG) show a composition bias toward basic and acidic residues. Residues 1–38 (MAQEQTKRTGGGDEDDTPGGDGAAGQERREKLAEDTDD) form a disordered region. The ARC ATPase binding stretch occupies residues 21-58 (DGAAGQERREKLAEDTDDLLDEIDDVLEENAEDFVRAY). Residues 24 to 52 (AGQERREKLAEDTDDLLDEIDDVLEENAE) adopt a coiled-coil conformation. Deamidated glutamine is present on Gln64. Gln64 participates in a covalent cross-link: Isoglutamyl lysine isopeptide (Gln-Lys) (interchain with K-? in acceptor proteins).

It belongs to the prokaryotic ubiquitin-like protein family. In terms of assembly, strongly interacts with the proteasome-associated ATPase ARC through a hydrophobic interface; the interacting region of Pup lies in its C-terminal half. There is one Pup binding site per ARC hexamer ring. Post-translationally, is modified by deamidation of its C-terminal glutamine to glutamate by the deamidase Dop, a prerequisite to the subsequent pupylation process.

It functions in the pathway protein degradation; proteasomal Pup-dependent pathway. In terms of biological role, protein modifier that is covalently attached to lysine residues of substrate proteins, thereby targeting them for proteasomal degradation. The tagging system is termed pupylation. This chain is Prokaryotic ubiquitin-like protein Pup, found in Rhodococcus opacus (strain B4).